Consider the following 155-residue polypeptide: Telokin-like protein 20 homolog (155 aa).

Positions Lys-109–Asp-155 are disordered.

This Orgyia pseudotsugata multicapsid polyhedrosis virus (OpMNPV) protein is Telokin-like protein 20 homolog.